The following is a 425-amino-acid chain: Meiotic recombination protein spo-11 (425 aa).

The segment at 1–38 is disordered; that stretch reads MYEYSFNPNIDHEPGSVESQQSTIYSDSDDSDDSFLDD. Residues 15-158 form the Topo IIA-type catalytic domain; it reads GSVESQQSTI…LNILSCGRGI (144 aa). A compositionally biased stretch (acidic residues) spans 27–38; it reads DSDDSDDSFLDD. The active-site O-(5'-phospho-DNA)-tyrosine intermediate is the Tyr119. Residues Glu202 and Asp255 each coordinate Mg(2+).

Belongs to the TOP6A family. Mg(2+) serves as cofactor.

The protein resides in the nucleus. It catalyses the reaction ATP-dependent breakage, passage and rejoining of double-stranded DNA.. In terms of biological role, required for meiotic recombination. Mediates DNA cleavage that forms the double-strand breaks (DSB) that initiate meiotic recombination. The protein is Meiotic recombination protein spo-11 (spo-11) of Caenorhabditis elegans.